The following is a 648-amino-acid chain: Probable potassium transport system protein Kup 1 (648 aa).

The next 12 membrane-spanning stretches (helical) occupy residues L25–F45, I57–V77, L113–P133, S153–M173, L184–I204, G219–L239, W263–L283, I312–G332, I362–F382, A391–V411, W417–F437, and E446–V466.

Belongs to the HAK/KUP transporter (TC 2.A.72) family.

It localises to the cell inner membrane. It catalyses the reaction K(+)(in) + H(+)(in) = K(+)(out) + H(+)(out). Transport of potassium into the cell. Likely operates as a K(+):H(+) symporter. In Rhizorhabdus wittichii (strain DSM 6014 / CCUG 31198 / JCM 15750 / NBRC 105917 / EY 4224 / RW1) (Sphingomonas wittichii), this protein is Probable potassium transport system protein Kup 1.